Reading from the N-terminus, the 145-residue chain is Bacilliredoxin SH1401 (145 aa).

The protein belongs to the bacilliredoxin family.

The protein is Bacilliredoxin SH1401 of Staphylococcus haemolyticus (strain JCSC1435).